The sequence spans 244 residues: Small ribosomal subunit protein eS4 (244 aa).

Residues 43–106 (LPLLLVVRDV…DETYLVLFDE (64 aa)) enclose the S4 RNA-binding domain.

Belongs to the eukaryotic ribosomal protein eS4 family.

This Methanococcus maripaludis (strain DSM 14266 / JCM 13030 / NBRC 101832 / S2 / LL) protein is Small ribosomal subunit protein eS4.